The following is a 202-amino-acid chain: MELVLRDDEHSVLNVSDITFGRDFNEALVHQVIISYSSSIRQGTHAQKNRSEVSGSGKKPWRQKGTGRARVGSLRSPLWRSGGVTFAAKPKSFYQKINKKMYRGALKSIFSELIRQKRLVVFREFTIEFPKTRLLIDKLRDIKLHDVLIITKTKDNNLKLASRNLYKVDVQTVNHMNPRSLISFNHVLITSKAIQKVEELLT.

The disordered stretch occupies residues 45 to 71; the sequence is HAQKNRSEVSGSGKKPWRQKGTGRARV.

Belongs to the universal ribosomal protein uL4 family. In terms of assembly, part of the 50S ribosomal subunit.

One of the primary rRNA binding proteins, this protein initially binds near the 5'-end of the 23S rRNA. It is important during the early stages of 50S assembly. It makes multiple contacts with different domains of the 23S rRNA in the assembled 50S subunit and ribosome. In terms of biological role, forms part of the polypeptide exit tunnel. The sequence is that of Large ribosomal subunit protein uL4 from Buchnera aphidicola subsp. Baizongia pistaciae (strain Bp).